The sequence spans 169 residues: X polypeptide (169 aa).

This sequence belongs to the IagB/IpgF/P19 family.

This is X polypeptide (X) from Escherichia coli.